The primary structure comprises 907 residues: MEIHPSLVVEPSYPDLIIHAGEVTLGEKDRNKMDSKKKRLEKARITEAACALLNSGGGVIVMQMSNKSEHPVEMGLDLETSLRELIPSSDLQAFIETKQQGDLFYIFVKSWSCSPKDGSTKPRICSLSSSLYCRSLTSKLPLDSKETFEFLERKKTCVKGSLTDGKGPPAKIPRLMYQNDLESNPAFEIFQSERLEYGQRLPFSESASIEFKQFSTRRAHEYIKSVIPEYISAFANTQGGYLLFGVDDESKRVLGCPKDNVDRDSLKAVVNEAISKLPVFHFCSSKEKVSYKTRVIDVFKEGNLYGYLCVIKVERFCCAVFSEAPISWMADKENGVYSLNTEKWVRMMVDIGPEAASSKQSSLDDLSKDFECQLSLSNSPPHCRPVYSKKGLEHKGDLQKRLFQVSADCFKYTPESLWRELCSQHERLENLISQQMCSFSCGLLILSRSWAVDLNLEGKQGVICDALLIAENSPPTLYTILEEQDELGQDYCTRTAFTLKQKLVNTGGYTGRVCVMTKVLCLSSQNNIETNGNSVSLIDYPRSYNLANIQEMEDLLQALVIVLLNFSSFLSDQLGCEILNLLTVQQYEILSKSLHKTRKLFVHGMPGSGKTIIAMKIMEKIKNTFHCERDSILYICENQLLRDFIRAKNVCRAVTRKTFMTPNFEVEKIQHIIVDEAQNFRTENGDWYMKAKRITQRMKTCPQIFWIFLDYFQTSHQKESGLPDFLHQYPKEELTKVVRNADKIAEFLQKISEKIRSNPPPIIPRESLNMVCEFNWSQGVSGTCKLLTSLGLEQMARYVAERCYFFLKNGYSAQDIAVLFSTEDEKDNNEDMFLREIRNRTSQIDDAYHLYMFDSIRRFSGLERSIVFGIDPRTAEKSIFHNLMLCLASRARKHLYILSKVPNPFNF.

The tract at residues 1–353 (MEIHPSLVVE…WVRMMVDIGP (353 aa)) is n'-domain region. Residues Glu205 and Glu210 contribute to the active site. Zn(2+) is bound by residues His281, Cys283, and Cys318. Residue 604–611 (GMPGSGKT) participates in ATP binding.

It belongs to the Schlafen family. Subgroup III subfamily. Mg(2+) serves as cofactor.

It localises to the cytoplasm. Endoribonuclease that cleaves tRNAs and rRNAs. Cleaves tRNAs 11 nucleotides from the 3'-terminus at the acceptor stem. Does not act on tRNA(Sec). The polypeptide is Schlafen family member 13 (Rattus norvegicus (Rat)).